The sequence spans 399 residues: Developmentally-regulated G-protein 1 (399 aa).

Residues 63-288 (GRVALIGFPS…LLARMWDEMG (226 aa)) enclose the OBG-type G domain. Residues 69-76 (GFPSVGKS), 115-119 (DLPGI), and 246-249 (NKID) each bind GTP. Residues 288–366 (GLVRVYSKPQ…EDEDVVQIVK (79 aa)) enclose the TGS domain. The segment at 367 to 399 (KKERDEGGRGRFKSHSNAPARIADREKKAPLKQ) is disordered. A compositionally biased stretch (basic and acidic residues) spans 388-399 (IADREKKAPLKQ).

The protein belongs to the TRAFAC class OBG-HflX-like GTPase superfamily. OBG GTPase family. In terms of tissue distribution, expressed in actively growing tissues and reproductive organs. Mostly expressed in leaves, stems and siliques. Also present in flowers and flower buds, and, to a lower extent, in roots.

The protein resides in the cytoplasmic vesicle. It localises to the cytoplasm. Its function is as follows. Binds GDP and GTP, and has low GTPase activity. May interact with phosphatidic acid (PA). The protein is Developmentally-regulated G-protein 1 (DRG1) of Arabidopsis thaliana (Mouse-ear cress).